The chain runs to 546 residues: Chaperonin GroEL (546 aa).

Residues 30–33, lysine 51, 87–91, glycine 415, 479–481, and aspartate 495 each bind ATP; these read TLGP, DGTTT, and NAA. The disordered stretch occupies residues 526-546; sequence KEDAPMPGGMPGGMGGMGMDM. A compositionally biased stretch (gly residues) spans 534-546; it reads GMPGGMGGMGMDM.

Belongs to the chaperonin (HSP60) family. Forms a cylinder of 14 subunits composed of two heptameric rings stacked back-to-back. Interacts with the co-chaperonin GroES.

The protein localises to the cytoplasm. It carries out the reaction ATP + H2O + a folded polypeptide = ADP + phosphate + an unfolded polypeptide.. Functionally, together with its co-chaperonin GroES, plays an essential role in assisting protein folding. The GroEL-GroES system forms a nano-cage that allows encapsulation of the non-native substrate proteins and provides a physical environment optimized to promote and accelerate protein folding. This is Chaperonin GroEL from Burkholderia thailandensis.